A 438-amino-acid polypeptide reads, in one-letter code: Enolase (438 aa).

Residues H159 and E168 each contribute to the substrate site. E211 acts as the Proton donor in catalysis. Mg(2+) contacts are provided by D246, E297, and D322. Substrate-binding residues include E297 and D322. K347 (proton acceptor) is an active-site residue. Substrate contacts are provided by residues 374 to 377 and K398; that span reads SHRS.

The protein belongs to the enolase family. Homodimer. The cofactor is Mg(2+).

It is found in the cytoplasm. It carries out the reaction (2R)-2-phosphoglycerate = phosphoenolpyruvate + H2O. It functions in the pathway carbohydrate degradation; glycolysis; pyruvate from D-glyceraldehyde 3-phosphate: step 4/5. The protein is Enolase (ENO) of Alternaria alternata (Alternaria rot fungus).